The following is a 505-amino-acid chain: Serine/threonine protein kinase OSK1 (505 aa).

One can recognise a Protein kinase domain in the interval 14–266; it reads YRIGKTLGIG…IREIREHQWF (253 aa). ATP contacts are provided by residues 20 to 28 and Lys-43; that span reads LGIGSFGKV. Catalysis depends on Asp-137, which acts as the Proton acceptor. The region spanning 287-327 is the UBA domain; that stretch reads KLDDETLNDVINMGFDKNQLIESLHKRLQNEATVAYYLLLD. A compositionally biased stretch (polar residues) spans 347–361; the sequence is SSLAQVTPAETPNSA. Positions 347–372 are disordered; the sequence is SSLAQVTPAETPNSATDHRQHGHMES. One can recognise a KA1 domain in the interval 456 to 504; that stretch reads SEKSTHTVKFEIQLYKTRDEKYLLDLQRVSGPQLLFLDLCSAFLTQLRV.

The protein belongs to the protein kinase superfamily. Ser/Thr protein kinase family. Expressed in young roots, young shoots, flowers, and immature seeds. Mostly expressed in leaf sheaths and roots, and to a lower extent, in germinating seeds, leaf blades and panicles.

The protein localises to the nucleus. The catalysed reaction is L-seryl-[protein] + ATP = O-phospho-L-seryl-[protein] + ADP + H(+). It catalyses the reaction L-threonyl-[protein] + ATP = O-phospho-L-threonyl-[protein] + ADP + H(+). Its function is as follows. Serine/threonine-protein kinase involved in sugar signaling during germination and seedling growth. Negative regulators of sugar response complex (SRC) in alpha-amylase gene promoters, thus relieving SRC sugar repression in a MYBS1-dependent manner. Required for MYBS1 and AAMY3 accumulation under glucose starvation. The sequence is that of Serine/threonine protein kinase OSK1 from Oryza sativa subsp. japonica (Rice).